The primary structure comprises 270 residues: Probable 6-oxopurine nucleoside phosphorylase (270 aa).

Phosphate-binding positions include serine 10 and 48–49; that span reads RH. Position 191 (methionine 191) interacts with substrate. Threonine 192 serves as a coordination point for phosphate. 215–217 contacts substrate; that stretch reads NYA.

This sequence belongs to the PNP/MTAP phosphorylase family. MTAP subfamily. In terms of assembly, homohexamer. Dimer of a homotrimer.

It carries out the reaction a purine D-ribonucleoside + phosphate = a purine nucleobase + alpha-D-ribose 1-phosphate. It functions in the pathway purine metabolism; purine nucleoside salvage. Its function is as follows. Purine nucleoside phosphorylase which is highly specific for 6-oxopurine nucleosides. Cleaves guanosine or inosine to respective bases and sugar-1-phosphate molecules. Involved in purine salvage. The protein is Probable 6-oxopurine nucleoside phosphorylase of Korarchaeum cryptofilum (strain OPF8).